A 133-amino-acid chain; its full sequence is Antifungal protein ginkbilobin-like protein 1 (133 aa).

The first 24 residues, 1–24 (MSMGSFGFALAVMVLAVLVASAAG), serve as a signal peptide directing secretion. The region spanning 28-133 (TNFVSSACNT…CFIRYEQYSI (106 aa)) is the Gnk2-homologous domain. Cystine bridges form between Cys35–Cys111, Cys87–Cys96, and Cys99–Cys124. Asn36 contributes to the alpha-D-mannopyranose binding site. Alpha-D-mannopyranose contacts are provided by Arg118 and Glu129.

Its function is as follows. Exerts antifungal activity through its carbohydrate-binding specificity. The protein is Antifungal protein ginkbilobin-like protein 1 of Picea sitchensis (Sitka spruce).